The sequence spans 582 residues: MAFMEKPPAGKVLLDDTVPLTAAVEASQSLQSHTEYIIRVQRGISAENSWQIVRRYSDFDLLNNSLQITGLSLPLPPKKLIGNMDREFIAERQRGLQNYLNVIMANHVLSNCELLKKFLDPNNYSANYTEIALQQVSMFFRSEPKWEVVEPLKDIGWRIRKKYFLMKIKNQPKERLVLSWADLGPDKYLSDKDFQCLIKLLPSCVHPYIYRVTFATASESSALLIRAFNEKGTLKDLIYKAKPKDPFLKKYCNPKKTQGLELQQIKTYGRQILEALKFLHDKGFPYGHLHAANVMLDGNTCRLLDLENSLLGLPSFYRSYFTQFRKINTLESVDVHCFGHLLYEMTYGRPPDSVPVDSFPPASSLAVVAVLESTLSCEACKNGMPTVSRLLQMPLFSDVLLTTSEKPQFKIPTKLKEALRIAKECIEKRLTEEQKQIHQHRRLTRAQSHHGSEEERKRRKILARKKSKRSAVENSEEQPVKHSNSNNSAGSGASSPLTSPSSPTPPSTAGLSSALPPPPPPPPPPPPPAGPSPTSATEMPAPFLPQPVNGVNRGALLSSIQNFQKGTLRKAQTCDHSAPKIG.

The PX domain occupies Leu14–Ala126. Residues Phe88–Lys481 form the Protein kinase domain. The interval Glu433–Gly550 is disordered. Composition is skewed to basic residues over residues Ile437–Ser448 and Lys457–Arg469. Positions Ser483 to Ala514 are enriched in low complexity. Positions Leu515–Pro531 are enriched in pro residues. One can recognise a WH2 domain in the interval Val548–Thr567.

This sequence belongs to the protein kinase superfamily. Isoform 1 is present in all tissues examined. Isoform 2 is found in all tissues except skeletal muscle and very low levels in spleen. Both isoforms are widely expressed throughout the nervous system however levels of isoform 2 are higher in purified hippocampal and cortical neurons whereas glial cells express more isoform 1 than isoform 2.

The protein localises to the cytoplasm. Its subcellular location is the cell membrane. Binds to and modulates brain Na,K-ATPase subunits ATP1B1 and ATP1B3 and may thereby participate in the regulation of electrical excitability and synaptic transmission. May not display kinase activity. This is PX domain-containing protein kinase-like protein from Mus musculus (Mouse).